We begin with the raw amino-acid sequence, 164 residues long: V-type proton ATPase 16 kDa proteolipid subunit (164 aa).

Over 1-10 (MSDLCPPTAP) the chain is Lumenal. A helical transmembrane segment spans residues 11-31 (FFGFMGAAVALIFANLGAAYG). Over 32 to 53 (TAKSGVGVSSMGVMKPDLVMKS) the chain is Cytoplasmic. A helical membrane pass occupies residues 54–74 (IIPVVMAGVLGIYGLIIAVII). Over 75-96 (GNGVKGPEGGKPQYSSFTGFAH) the chain is Lumenal. The chain crosses the membrane as a helical span at residues 97 to 118 (LAAGLACGLSGMAAGIAIGIVG). Over 119–130 (DAGVRASAQQAK) the chain is Cytoplasmic. The chain crosses the membrane as a helical span at residues 131–155 (LYVGMVLILIFAEALGLYGLIVGLI). Residues 156–164 (LTSKEAPCS) are Lumenal-facing.

This sequence belongs to the V-ATPase proteolipid subunit family. As to quaternary structure, V-ATPase is a heteromultimeric enzyme composed of a peripheral catalytic V1 complex (main components: subunits A, B, C, D, E, and F) attached to an integral membrane V0 proton pore complex (main component: the proteolipid protein; which is present as a hexamer that forms the proton-conducting pore).

It localises to the vacuole membrane. Functionally, proton-conducting pore forming subunit of the membrane integral V0 complex of vacuolar ATPase. V-ATPase is responsible for acidifying a variety of intracellular compartments in eukaryotic cells. The polypeptide is V-type proton ATPase 16 kDa proteolipid subunit (VAP) (Chrysotila carterae (Marine alga)).